The following is a 269-amino-acid chain: RBPJ-interacting and tubulin-associated protein 1 (269 aa).

The Nuclear export signal motif lies at 5–17 (VELAISGMQTLHV). 2 disordered regions span residues 67-94 (GTGVSQALGANGSCESTSSSGSTPTLTP) and 145-269 (PATP…PPWK). Low complexity predominate over residues 79–93 (SCESTSSSGSTPTLT). Residues 92–108 (LTPRKKNKYRLISHTPS) carry the Nuclear localization signal motif. The interval 128 to 156 (WMARGDAAKLHALFWTPPATPRGSHSPRP) is interaction with RBPJ/RBPSUH. Residues 156-269 (PRETPVRCVH…ATQKTKPPWK (114 aa)) are interaction with tubulin. 2 stretches are compositionally biased toward polar residues: residues 202–220 (LTHPNVPSTGHTPASSPCT) and 247–269 (VSVSVPTTPRQGGATQKTKPPWK).

Belongs to the RITA family. In terms of assembly, interacts with RBPJ/RBPSUH.

Its subcellular location is the cytoplasm. It is found in the nucleus. The protein localises to the cytoskeleton. The protein resides in the microtubule organizing center. It localises to the centrosome. Tubulin-binding protein that acts as a negative regulator of Notch signaling pathway. Shuttles between the cytoplasm and the nucleus and mediates the nuclear export of RBPJ/RBPSUH, thereby preventing the interaction between RBPJ/RBPSUH and NICD product of Notch proteins (Notch intracellular domain), leading to down-regulate Notch-mediated transcription. May play a role in neurogenesis. The polypeptide is RBPJ-interacting and tubulin-associated protein 1 (RITA1) (Bos taurus (Bovine)).